The following is a 775-amino-acid chain: DNA polymerase (775 aa).

The protein belongs to the DNA polymerase type-B family. In terms of assembly, monomer.

It carries out the reaction DNA(n) + a 2'-deoxyribonucleoside 5'-triphosphate = DNA(n+1) + diphosphate. With respect to regulation, an 11-mer corresponding to the PIP-box of RfcL inhibits DNA synthesis. In terms of biological role, in addition to polymerase activity, this DNA polymerase exhibits 3' to 5' exonuclease activity. This is DNA polymerase (pol) from Pyrococcus furiosus (strain ATCC 43587 / DSM 3638 / JCM 8422 / Vc1).